Consider the following 197-residue polypeptide: Protein GrpE (197 aa).

The tract at residues 1–39 (MSSKEQKTPEGQAPEEIIMDQHEEIEAVEPEASAEQVDP) is disordered.

It belongs to the GrpE family. As to quaternary structure, homodimer.

It is found in the cytoplasm. Its function is as follows. Participates actively in the response to hyperosmotic and heat shock by preventing the aggregation of stress-denatured proteins, in association with DnaK and GrpE. It is the nucleotide exchange factor for DnaK and may function as a thermosensor. Unfolded proteins bind initially to DnaJ; upon interaction with the DnaJ-bound protein, DnaK hydrolyzes its bound ATP, resulting in the formation of a stable complex. GrpE releases ADP from DnaK; ATP binding to DnaK triggers the release of the substrate protein, thus completing the reaction cycle. Several rounds of ATP-dependent interactions between DnaJ, DnaK and GrpE are required for fully efficient folding. The chain is Protein GrpE from Escherichia coli O45:K1 (strain S88 / ExPEC).